The primary structure comprises 633 residues: DNA mismatch repair protein MutL (633 aa).

Belongs to the DNA mismatch repair MutL/HexB family.

Functionally, this protein is involved in the repair of mismatches in DNA. It is required for dam-dependent methyl-directed DNA mismatch repair. May act as a 'molecular matchmaker', a protein that promotes the formation of a stable complex between two or more DNA-binding proteins in an ATP-dependent manner without itself being part of a final effector complex. The chain is DNA mismatch repair protein MutL from Pseudomonas fluorescens (strain SBW25).